The chain runs to 346 residues: Dihydroorotate dehydrogenase (quinone) (346 aa).

Residues 62–66 (AGMDK) and T86 contribute to the FMN site. Substrate is bound at residue K66. 111–115 (NRMGF) is a substrate binding site. FMN is bound by residues N142 and N175. Residue N175 coordinates substrate. The active-site Nucleophile is the S178. N180 is a binding site for substrate. 2 residues coordinate FMN: K211 and V239. Residue 240–241 (NT) coordinates substrate. FMN-binding positions include G261, G289, and 310 to 311 (YT).

This sequence belongs to the dihydroorotate dehydrogenase family. Type 2 subfamily. Monomer. The cofactor is FMN.

Its subcellular location is the cell membrane. It catalyses the reaction (S)-dihydroorotate + a quinone = orotate + a quinol. Its pathway is pyrimidine metabolism; UMP biosynthesis via de novo pathway; orotate from (S)-dihydroorotate (quinone route): step 1/1. In terms of biological role, catalyzes the conversion of dihydroorotate to orotate with quinone as electron acceptor. In Thermus thermophilus (strain ATCC 27634 / DSM 579 / HB8), this protein is Dihydroorotate dehydrogenase (quinone).